We begin with the raw amino-acid sequence, 607 residues long: UvrABC system protein C (607 aa).

Residues 15 to 94 (ENPGVYLMKN…IKRHRPYFNV (80 aa)) form the GIY-YIG domain. The 36-residue stretch at 204-239 (DQVLKLLIRLMNEASARLDYETAALRRDQIASIKEV) folds into the UVR domain.

It belongs to the UvrC family. In terms of assembly, interacts with UvrB in an incision complex.

The protein resides in the cytoplasm. Functionally, the UvrABC repair system catalyzes the recognition and processing of DNA lesions. UvrC both incises the 5' and 3' sides of the lesion. The N-terminal half is responsible for the 3' incision and the C-terminal half is responsible for the 5' incision. This Dehalococcoides mccartyi (strain ATCC BAA-2100 / JCM 16839 / KCTC 5957 / BAV1) protein is UvrABC system protein C.